A 496-amino-acid chain; its full sequence is Glutamyl-tRNA(Gln) amidotransferase subunit A (496 aa).

Active-site charge relay system residues include lysine 75 and serine 150. Serine 174 (acyl-ester intermediate) is an active-site residue.

It belongs to the amidase family. GatA subfamily. As to quaternary structure, heterotrimer of A, B and C subunits.

It carries out the reaction L-glutamyl-tRNA(Gln) + L-glutamine + ATP + H2O = L-glutaminyl-tRNA(Gln) + L-glutamate + ADP + phosphate + H(+). Allows the formation of correctly charged Gln-tRNA(Gln) through the transamidation of misacylated Glu-tRNA(Gln) in organisms which lack glutaminyl-tRNA synthetase. The reaction takes place in the presence of glutamine and ATP through an activated gamma-phospho-Glu-tRNA(Gln). The chain is Glutamyl-tRNA(Gln) amidotransferase subunit A from Burkholderia ambifaria (strain MC40-6).